The chain runs to 687 residues: Chloride channel protein ClC-Ka (687 aa).

A run of 4 helical transmembrane segments spans residues 52–72, 161–181, 202–222, and 236–256; these read FLMTLGVLMALISYAMNFALG, LFLGKVGPFVHLSVMIAAYLG, VAGAAVGVATVFAAPFSGVLF, and YWRGFFAATCGAFMFRLLAVF. Glu-259, Glu-261, Asp-278, and Glu-281 together coordinate Ca(2+). Helical transmembrane passes span 282–302, 325–345, 396–416, 417–437, 452–472, and 486–506; these read IFFFVLLGAICGVASCAYLYC, PLYAALAATVLASITYPPGVG, FTIFGTLAFFLVMKFWMLILA, TTIPMPAGYFLPIFIIGAAIG, IVAGGVINPIMPGGYALAGAA, and LLAFELTGQIVHALPVLMAVL. The Cytoplasmic portion of the chain corresponds to 507–687; it reads AANAIAQSCQ…SALTNPPPAK (181 aa). 2 consecutive CBS domains span residues 551 to 612 and 628 to 686; these read MRRA…ARAS and TEPV…PPPA.

The protein belongs to the chloride channel (TC 2.A.49) family. CLCNKA subfamily. Homodimer. Interacts with BSND. Expressed predominantly in the kidney.

It localises to the basolateral cell membrane. It carries out the reaction chloride(in) = chloride(out). It catalyses the reaction bromide(in) = bromide(out). The catalysed reaction is nitrate(in) = nitrate(out). The enzyme catalyses iodide(out) = iodide(in). In terms of biological role, anion-selective channel permeable to small monovalent anions with ion selectivity for chloride &gt; bromide &gt; nitrate &gt; iodide. Forms a homodimeric channel where each subunit has its own ion conduction pathway. May conduct double-barreled currents controlled by two types of gates, two fast gates that control each subunit independently and a slow common gate that opens and shuts off both subunits simultaneously. Assembles with the regulatory subunit BSND/Barttin for sorting at the basolateral plasma membrane domain and functional switch to the ion conducting state. CLCNKA:BSND channels display mostly a linear current-voltage relationship with fast gating at negative potentials. Mediates transepithelial chloride transport from the lumen to interstitial compartment along the thin ascending limb of Henle's loop, contributing to generation of hypertonic medullary interstitium as a countercurrent system to achieve urine concentration. Conducts chloride currents in the stria vascularis of the inner ear to establish the endocochlear potential necessary for normal hearing. The protein is Chloride channel protein ClC-Ka (CLCNKA) of Oryctolagus cuniculus (Rabbit).